The sequence spans 171 residues: Protein phosphatase 1 regulatory subunit 1A (171 aa).

At M1 the chain carries N-acetylmethionine. Residues 9-12 (KIQF) are essential for activity. The interval 17-171 (LEPHLDPEAA…PLDSQGASLV (155 aa)) is disordered. The segment covering 19–29 (PHLDPEAAEQI) has biased composition (basic and acidic residues). T35 carries the phosphothreonine; by PKA modification. Residues 42–54 (TSDQSSPEVDEDR) are essential for activity. Phosphoserine occurs at positions 43, 46, 47, and 67. The span at 122 to 133 (GSASRPDTSGTA) shows a compositional bias: polar residues. The segment covering 137-148 (AESKPKTQEQRG) has biased composition (basic and acidic residues). Residues 143 to 171 (TQEQRGVEPSTEDLSAHMLPLDSQGASLV) form an interaction with PPP1R15A region.

The protein belongs to the protein phosphatase inhibitor 1 family. In terms of assembly, interacts with PPP1R15A. Phosphorylation of Thr-35 is required for activity.

Inhibitor of protein-phosphatase 1. This protein may be important in hormonal control of glycogen metabolism. Hormones that elevate intracellular cAMP increase I-1 activity in many tissues. I-1 activation may impose cAMP control over proteins that are not directly phosphorylated by PKA. Following a rise in intracellular calcium, I-1 is inactivated by calcineurin (or PP2B). Does not inhibit type-2 phosphatases. The protein is Protein phosphatase 1 regulatory subunit 1A (Ppp1r1a) of Rattus norvegicus (Rat).